A 412-amino-acid chain; its full sequence is CCA-adding enzyme (412 aa).

The ATP site is built by serine 41 and lysine 44. CTP-binding residues include serine 41 and lysine 44. Positions 53, 55, and 106 each coordinate Mg(2+). Histidine 129, lysine 149, and tyrosine 158 together coordinate ATP. 3 residues coordinate CTP: histidine 129, lysine 149, and tyrosine 158.

Belongs to the tRNA nucleotidyltransferase/poly(A) polymerase family. Archaeal CCA-adding enzyme subfamily. As to quaternary structure, homodimer. Requires Mg(2+) as cofactor.

The catalysed reaction is a tRNA precursor + 2 CTP + ATP = a tRNA with a 3' CCA end + 3 diphosphate. It carries out the reaction a tRNA with a 3' CCA end + 2 CTP + ATP = a tRNA with a 3' CCACCA end + 3 diphosphate. Its function is as follows. Catalyzes the addition and repair of the essential 3'-terminal CCA sequence in tRNAs without using a nucleic acid template. Adds these three nucleotides in the order of C, C, and A to the tRNA nucleotide-73, using CTP and ATP as substrates and producing inorganic pyrophosphate. tRNA 3'-terminal CCA addition is required both for tRNA processing and repair. Also involved in tRNA surveillance by mediating tandem CCA addition to generate a CCACCA at the 3' terminus of unstable tRNAs. While stable tRNAs receive only 3'-terminal CCA, unstable tRNAs are marked with CCACCA and rapidly degraded. This is CCA-adding enzyme from Saccharolobus islandicus (strain Y.N.15.51 / Yellowstone #2) (Sulfolobus islandicus).